Reading from the N-terminus, the 418-residue chain is Glutamyl-tRNA reductase (418 aa).

Residues 49-52 (TCNR), serine 109, 114-116 (EPQ), and glutamine 120 each bind substrate. Cysteine 50 acts as the Nucleophile in catalysis. 189–194 (GAGETI) is an NADP(+) binding site.

The protein belongs to the glutamyl-tRNA reductase family. In terms of assembly, homodimer.

It carries out the reaction (S)-4-amino-5-oxopentanoate + tRNA(Glu) + NADP(+) = L-glutamyl-tRNA(Glu) + NADPH + H(+). It functions in the pathway porphyrin-containing compound metabolism; protoporphyrin-IX biosynthesis; 5-aminolevulinate from L-glutamyl-tRNA(Glu): step 1/2. In terms of biological role, catalyzes the NADPH-dependent reduction of glutamyl-tRNA(Glu) to glutamate 1-semialdehyde (GSA). In Escherichia coli O157:H7, this protein is Glutamyl-tRNA reductase.